Reading from the N-terminus, the 245-residue chain is Thiopurine S-methyltransferase (245 aa).

S-adenosyl-L-methionine is bound at residue 29–40 (WREKWVDGKIGF). Position 40 (Phe40) interacts with substrate. Lys58 is subject to N6-acetyllysine. Leu69, Glu90, and Arg152 together coordinate S-adenosyl-L-methionine.

This sequence belongs to the class I-like SAM-binding methyltransferase superfamily. TPMT family. As to quaternary structure, monomer.

It is found in the cytoplasm. It catalyses the reaction S-adenosyl-L-methionine + a thiopurine = S-adenosyl-L-homocysteine + a thiopurine S-methylether.. In Lynx rufus (Bobcat), this protein is Thiopurine S-methyltransferase (TPMT).